A 575-amino-acid chain; its full sequence is MRDYVKINIASPKQILKWTERLTPKGKYIGKLKNSKKTLDKKGKCIRGGLFCEQIFGPTKKNTCRCGYYKNYKKSKKEKKHIKLCRICNVEITDPIIRNYRMGYIELNIPIINILYLNINPCYLAIITNLKINYLKQLHSGKAYITIKDKNQKEKKLTGGEAINDILSKIDLEKTLIKLTNNIHQYKEKNITIKNFKNILNKIKLYNYLLQTKIKFSWLLFKYLPVLPPNVRPIINMKNNQQISNDLNTLYASIINVNNKIIKLKESLIPDNYFINEKILLQKKVDQLINNEKYKENKLGKIINNKKLKSITENIKGKEGIIRENMLGKTVNFSGRSVIVVEPTLNLNECGLPKEMAINLFYPFIIKELIKLKLIKRLYKIKKITKILDIILENIIKNHYILLNRAPTLHRLNIQAFQPKLTIGKSIKLHPLVCSAFNADFDGDQMGVHIPLSLKAQAEARNILISINNCNSLKNGDPNILPSQDIILGCYFSNIENCNLLYILNKIQIYTNMEKIKMEYKKENLSIHNFIWLNFKNKQQIDKLKIKRKNLIKKIIFLRTTVGRILFNDIIKNFL.

4 residues coordinate Zn(2+): Cys-64, Cys-66, Cys-85, and Cys-88. The Mg(2+) site is built by Asp-440, Asp-442, and Asp-444.

Belongs to the RNA polymerase beta' chain family. RpoC1 subfamily. As to quaternary structure, in plastids the minimal PEP RNA polymerase catalytic core is composed of four subunits: alpha, beta, beta', and beta''. When a (nuclear-encoded) sigma factor is associated with the core the holoenzyme is formed, which can initiate transcription. It depends on Mg(2+) as a cofactor. The cofactor is Zn(2+).

The protein resides in the plastid. It carries out the reaction RNA(n) + a ribonucleoside 5'-triphosphate = RNA(n+1) + diphosphate. Its function is as follows. DNA-dependent RNA polymerase catalyzes the transcription of DNA into RNA using the four ribonucleoside triphosphates as substrates. This Euglena longa (Euglenophycean alga) protein is DNA-directed RNA polymerase subunit beta'.